Here is a 416-residue protein sequence, read N- to C-terminus: Notoamide biosynthesis cluster protein N' (416 aa).

Residues 1–16 (MRAALLTLAFTALAAA) form the signal peptide. N-linked (GlcNAc...) asparagine glycans are attached at residues N119 and N262.

In terms of biological role, part of the gene cluster that mediates the biosynthesis of notoamide, a fungal indole alkaloid that belongs to a family of natural products containing a characteristic bicyclo[2.2.2]diazaoctane core. The first step of notoamide biosynthesis involves coupling of L-proline and L-tryptophan by the bimodular NRPS notE', to produce cyclo-L-tryptophan-L-proline called brevianamide F. The reverse prenyltransferase notF' then acts as a deoxybrevianamide E synthase and converts brevianamide F to deoxybrevianamide E via reverse prenylation at C-2 of the indole ring leading to the bicyclo[2.2.2]diazaoctane core. Deoxybrevianamide E is further hydroxylated at C-6 of the indole ring, likely catalyzed by the cytochrome P450 monooxygenase notG', to yield 6-hydroxy-deoxybrevianamide E. 6-hydroxy-deoxybrevianamide E is a specific substrate of the prenyltransferase notC' for normal prenylation at C-7 to produce 6-hydroxy-7-prenyl-deoxybrevianamide, also called notoamide S. As the proposed pivotal branching point in notoamide biosynthesis, notoamide S can be diverted to notoamide E through an oxidative pyran ring closure putatively catalyzed by either notH' cytochrome P450 monooxygenase or the notD' FAD-linked oxidoreductase. This step would be followed by an indole 2,3-epoxidation-initiated pinacol-like rearrangement catalyzed by the notB' FAD-dependent monooxygenase leading to the formation of notoamide C and notoamide D. On the other hand notoamide S is converted to notoamide T by notH' (or notD'), a bifunctional oxidase that also functions as the intramolecular Diels-Alderase responsible for generation of (-)-notoamide T. To generate antipodal (+)-notoaminide T, notH (or notD) in Aspergillus strain MF297-2 is expected to catalyze a Diels-Alder reaction leading to the opposite stereochemistry. The remaining oxidoreductase notD' (or notH') likely catalyzes the oxidative pyran ring formation to yield (-)-stephacidin A. The FAD-dependent monooxygenase notI' is highly similar to notB' and is predicted to catalyze a similar conversion from (-)-stephacidin A to (+)-notoamide B via the 2,3-epoxidation of (-)-stephacidin A followed by a pinacol-type rearrangement. Finally, it remains unclear which enzyme could be responsible for the final hydroxylation steps leading to notoamide A and sclerotiamide. The function of notN' in the notoamide biosynthesis has not been determined yet. The sequence is that of Notoamide biosynthesis cluster protein N' from Aspergillus versicolor.